The primary structure comprises 309 residues: Protein FdhE homolog (309 aa).

The protein belongs to the FdhE family.

It localises to the cytoplasm. Necessary for formate dehydrogenase activity. The protein is Protein FdhE homolog of Cronobacter sakazakii (strain ATCC BAA-894) (Enterobacter sakazakii).